Reading from the N-terminus, the 489-residue chain is Ubiquitin carboxyl-terminal hydrolase 14 (489 aa).

Residues 102-458 enclose the USP domain; the sequence is CGLANLGNTC…SAYVLLYEAR (357 aa). The Nucleophile role is filled by Cys-111. His-409 acts as the Proton acceptor in catalysis. The segment at 467–489 is disordered; it reads PPAPVPTEVAADTAEPMEVSEKQ.

This sequence belongs to the peptidase C19 family. USP14/UBP6 subfamily.

The enzyme catalyses Thiol-dependent hydrolysis of ester, thioester, amide, peptide and isopeptide bonds formed by the C-terminal Gly of ubiquitin (a 76-residue protein attached to proteins as an intracellular targeting signal).. Its function is as follows. Proteasome-associated deubiquitinase which releases ubiquitin from the proteasome targeted ubiquitinated proteins. Ensures the regeneration of ubiquitin at the proteasome. This is Ubiquitin carboxyl-terminal hydrolase 14 (usp-14) from Caenorhabditis elegans.